Here is a 335-residue protein sequence, read N- to C-terminus: Glyceraldehyde-3-phosphate dehydrogenase 2 (335 aa).

NAD(+)-binding positions include R13–I14, D35, and R80. Residues S125 and S151 each carry the phosphoserine modification. S151–T153 is a D-glyceraldehyde 3-phosphate binding site. Residue C152 is the Nucleophile of the active site. Phosphothreonine occurs at positions 153, 154, 182, and 184. T182 serves as a coordination point for D-glyceraldehyde 3-phosphate. Residues S192, S203, and S209 each carry the phosphoserine modification. T211 carries the phosphothreonine modification. Residues T211–G212 and R234 each bind D-glyceraldehyde 3-phosphate. T237 bears the Phosphothreonine mark. Residue S241 is modified to Phosphoserine. An NAD(+)-binding site is contributed by N316.

Belongs to the glyceraldehyde-3-phosphate dehydrogenase family. In terms of assembly, homotetramer.

The protein resides in the cytoplasm. The enzyme catalyses D-glyceraldehyde 3-phosphate + phosphate + NAD(+) = (2R)-3-phospho-glyceroyl phosphate + NADH + H(+). It participates in carbohydrate degradation; glycolysis; pyruvate from D-glyceraldehyde 3-phosphate: step 1/5. In Schizosaccharomyces pombe (strain 972 / ATCC 24843) (Fission yeast), this protein is Glyceraldehyde-3-phosphate dehydrogenase 2 (gpd3).